The following is a 103-amino-acid chain: Pyrimidine/purine nucleoside phosphorylase (103 aa).

It belongs to the nucleoside phosphorylase PpnP family.

The catalysed reaction is a purine D-ribonucleoside + phosphate = a purine nucleobase + alpha-D-ribose 1-phosphate. It carries out the reaction adenosine + phosphate = alpha-D-ribose 1-phosphate + adenine. The enzyme catalyses cytidine + phosphate = cytosine + alpha-D-ribose 1-phosphate. It catalyses the reaction guanosine + phosphate = alpha-D-ribose 1-phosphate + guanine. The catalysed reaction is inosine + phosphate = alpha-D-ribose 1-phosphate + hypoxanthine. It carries out the reaction thymidine + phosphate = 2-deoxy-alpha-D-ribose 1-phosphate + thymine. The enzyme catalyses uridine + phosphate = alpha-D-ribose 1-phosphate + uracil. It catalyses the reaction xanthosine + phosphate = alpha-D-ribose 1-phosphate + xanthine. Its function is as follows. Catalyzes the phosphorolysis of diverse nucleosides, yielding D-ribose 1-phosphate and the respective free bases. Can use uridine, adenosine, guanosine, cytidine, thymidine, inosine and xanthosine as substrates. Also catalyzes the reverse reactions. This is Pyrimidine/purine nucleoside phosphorylase from Citrifermentans bemidjiense (strain ATCC BAA-1014 / DSM 16622 / JCM 12645 / Bem) (Geobacter bemidjiensis).